The sequence spans 787 residues: Probable phosphoketolase (787 aa).

It belongs to the XFP family. Thiamine diphosphate is required as a cofactor.

The sequence is that of Probable phosphoketolase from Pediococcus pentosaceus (strain ATCC 25745 / CCUG 21536 / LMG 10740 / 183-1w).